The chain runs to 314 residues: 4-hydroxy-3-methylbut-2-enyl diphosphate reductase (314 aa).

A [4Fe-4S] cluster-binding site is contributed by Cys-12. (2E)-4-hydroxy-3-methylbut-2-enyl diphosphate is bound by residues His-41 and His-74. Positions 41 and 74 each coordinate dimethylallyl diphosphate. Isopentenyl diphosphate contacts are provided by His-41 and His-74. [4Fe-4S] cluster is bound at residue Cys-96. Residue His-124 participates in (2E)-4-hydroxy-3-methylbut-2-enyl diphosphate binding. Position 124 (His-124) interacts with dimethylallyl diphosphate. His-124 provides a ligand contact to isopentenyl diphosphate. Glu-126 serves as the catalytic Proton donor. Thr-167 is a (2E)-4-hydroxy-3-methylbut-2-enyl diphosphate binding site. Residue Cys-197 participates in [4Fe-4S] cluster binding. Positions 225, 226, 227, and 269 each coordinate (2E)-4-hydroxy-3-methylbut-2-enyl diphosphate. Dimethylallyl diphosphate is bound by residues Ser-225, Ser-226, Asn-227, and Ser-269. The isopentenyl diphosphate site is built by Ser-225, Ser-226, Asn-227, and Ser-269.

The protein belongs to the IspH family. [4Fe-4S] cluster is required as a cofactor.

The enzyme catalyses isopentenyl diphosphate + 2 oxidized [2Fe-2S]-[ferredoxin] + H2O = (2E)-4-hydroxy-3-methylbut-2-enyl diphosphate + 2 reduced [2Fe-2S]-[ferredoxin] + 2 H(+). It carries out the reaction dimethylallyl diphosphate + 2 oxidized [2Fe-2S]-[ferredoxin] + H2O = (2E)-4-hydroxy-3-methylbut-2-enyl diphosphate + 2 reduced [2Fe-2S]-[ferredoxin] + 2 H(+). It participates in isoprenoid biosynthesis; dimethylallyl diphosphate biosynthesis; dimethylallyl diphosphate from (2E)-4-hydroxy-3-methylbutenyl diphosphate: step 1/1. Its pathway is isoprenoid biosynthesis; isopentenyl diphosphate biosynthesis via DXP pathway; isopentenyl diphosphate from 1-deoxy-D-xylulose 5-phosphate: step 6/6. Catalyzes the conversion of 1-hydroxy-2-methyl-2-(E)-butenyl 4-diphosphate (HMBPP) into a mixture of isopentenyl diphosphate (IPP) and dimethylallyl diphosphate (DMAPP). Acts in the terminal step of the DOXP/MEP pathway for isoprenoid precursor biosynthesis. This chain is 4-hydroxy-3-methylbut-2-enyl diphosphate reductase, found in Haemophilus ducreyi (strain 35000HP / ATCC 700724).